The following is a 310-amino-acid chain: Transaldolase (310 aa).

Lys-124 acts as the Schiff-base intermediate with substrate in catalysis.

The protein belongs to the transaldolase family. Type 1 subfamily. In terms of assembly, homodimer.

It localises to the cytoplasm. The catalysed reaction is D-sedoheptulose 7-phosphate + D-glyceraldehyde 3-phosphate = D-erythrose 4-phosphate + beta-D-fructose 6-phosphate. Its pathway is carbohydrate degradation; pentose phosphate pathway; D-glyceraldehyde 3-phosphate and beta-D-fructose 6-phosphate from D-ribose 5-phosphate and D-xylulose 5-phosphate (non-oxidative stage): step 2/3. Transaldolase is important for the balance of metabolites in the pentose-phosphate pathway. This is Transaldolase from Teredinibacter turnerae (strain ATCC 39867 / T7901).